The chain runs to 59 residues: UPF0434 protein PMI0721 (59 aa).

It belongs to the UPF0434 family.

The chain is UPF0434 protein PMI0721 from Proteus mirabilis (strain HI4320).